Consider the following 369-residue polypeptide: Quinolinate synthase (369 aa).

Residues His47 and Ser64 each coordinate iminosuccinate. Position 111 (Cys111) interacts with [4Fe-4S] cluster. Residues 142–144 (YVN) and Ser163 each bind iminosuccinate. Cys231 contacts [4Fe-4S] cluster. Residues 257 to 259 (HPE) and Thr274 contribute to the iminosuccinate site. Position 321 (Cys321) interacts with [4Fe-4S] cluster.

The protein belongs to the quinolinate synthase family. Type 3 subfamily. [4Fe-4S] cluster serves as cofactor.

The protein resides in the cytoplasm. It carries out the reaction iminosuccinate + dihydroxyacetone phosphate = quinolinate + phosphate + 2 H2O + H(+). The protein operates within cofactor biosynthesis; NAD(+) biosynthesis; quinolinate from iminoaspartate: step 1/1. In terms of biological role, catalyzes the condensation of iminoaspartate with dihydroxyacetone phosphate to form quinolinate. The chain is Quinolinate synthase from Bacillus pumilus (strain SAFR-032).